We begin with the raw amino-acid sequence, 129 residues long: Small ribosomal subunit protein uS11 (129 aa).

Belongs to the universal ribosomal protein uS11 family. As to quaternary structure, part of the 30S ribosomal subunit. Interacts with proteins S7 and S18. Binds to IF-3.

Its function is as follows. Located on the platform of the 30S subunit, it bridges several disparate RNA helices of the 16S rRNA. Forms part of the Shine-Dalgarno cleft in the 70S ribosome. This is Small ribosomal subunit protein uS11 from Limosilactobacillus fermentum (strain NBRC 3956 / LMG 18251) (Lactobacillus fermentum).